Consider the following 488-residue polypeptide: Ribulose bisphosphate carboxylase large chain (488 aa).

Residues asparagine 127 and threonine 177 each contribute to the substrate site. The active-site Proton acceptor is the lysine 179. Lysine 181 is a binding site for substrate. 3 residues coordinate Mg(2+): lysine 205, aspartate 207, and glutamate 208. Lysine 205 carries the N6-carboxylysine modification. Histidine 297 serves as the catalytic Proton acceptor. Positions 298, 330, and 382 each coordinate substrate.

This sequence belongs to the RuBisCO large chain family. Type I subfamily. In terms of assembly, heterohexadecamer of 8 large chains and 8 small chains. Mg(2+) serves as cofactor.

The protein localises to the plastid. Its subcellular location is the chloroplast. It carries out the reaction 2 (2R)-3-phosphoglycerate + 2 H(+) = D-ribulose 1,5-bisphosphate + CO2 + H2O. The catalysed reaction is D-ribulose 1,5-bisphosphate + O2 = 2-phosphoglycolate + (2R)-3-phosphoglycerate + 2 H(+). In terms of biological role, ruBisCO catalyzes two reactions: the carboxylation of D-ribulose 1,5-bisphosphate, the primary event in carbon dioxide fixation, as well as the oxidative fragmentation of the pentose substrate in the photorespiration process. Both reactions occur simultaneously and in competition at the same active site. The sequence is that of Ribulose bisphosphate carboxylase large chain (rbcL) from Porphyra umbilicalis (Purple laver).